Here is a 345-residue protein sequence, read N- to C-terminus: Uroporphyrinogen decarboxylase (345 aa).

Residues 28–32 (RQAGR), Asp77, Tyr153, Ser208, and His322 each bind substrate.

This sequence belongs to the uroporphyrinogen decarboxylase family. As to quaternary structure, homodimer.

The protein localises to the cytoplasm. It carries out the reaction uroporphyrinogen III + 4 H(+) = coproporphyrinogen III + 4 CO2. It functions in the pathway porphyrin-containing compound metabolism; protoporphyrin-IX biosynthesis; coproporphyrinogen-III from 5-aminolevulinate: step 4/4. Functionally, catalyzes the decarboxylation of four acetate groups of uroporphyrinogen-III to yield coproporphyrinogen-III. This chain is Uroporphyrinogen decarboxylase, found in Solibacter usitatus (strain Ellin6076).